The primary structure comprises 89 residues: Small ribosomal subunit protein uS14A (89 aa).

It belongs to the universal ribosomal protein uS14 family. As to quaternary structure, part of the 30S ribosomal subunit. Contacts proteins S3 and S10.

Its function is as follows. Binds 16S rRNA, required for the assembly of 30S particles and may also be responsible for determining the conformation of the 16S rRNA at the A site. In Bacillus licheniformis (strain ATCC 14580 / DSM 13 / JCM 2505 / CCUG 7422 / NBRC 12200 / NCIMB 9375 / NCTC 10341 / NRRL NRS-1264 / Gibson 46), this protein is Small ribosomal subunit protein uS14A.